A 431-amino-acid chain; its full sequence is Glutamate-1-semialdehyde 2,1-aminomutase (431 aa).

N6-(pyridoxal phosphate)lysine is present on Lys-269.

This sequence belongs to the class-III pyridoxal-phosphate-dependent aminotransferase family. HemL subfamily. Homodimer. Pyridoxal 5'-phosphate serves as cofactor.

It localises to the cytoplasm. The enzyme catalyses (S)-4-amino-5-oxopentanoate = 5-aminolevulinate. It functions in the pathway porphyrin-containing compound metabolism; protoporphyrin-IX biosynthesis; 5-aminolevulinate from L-glutamyl-tRNA(Glu): step 2/2. It participates in porphyrin-containing compound metabolism; chlorophyll biosynthesis. The sequence is that of Glutamate-1-semialdehyde 2,1-aminomutase from Chlorobium limicola (strain DSM 245 / NBRC 103803 / 6330).